Here is a 350-residue protein sequence, read N- to C-terminus: Phosphotriesterase-related protein (350 aa).

A divalent metal cation-binding residues include histidine 22, histidine 24, glutamate 169, histidine 201, histidine 230, and aspartate 298.

It belongs to the metallo-dependent hydrolases superfamily. Phosphotriesterase family. Requires a divalent metal cation as cofactor.

The chain is Phosphotriesterase-related protein from Drosophila grimshawi (Hawaiian fruit fly).